Consider the following 244-residue polypeptide: Ethylene-responsive transcription factor ERF013 (244 aa).

The disordered stretch occupies residues 1-33 (MVKQELKIQVTTSSSSLSHSSSSSSSSTSALRH). Residues 11 to 29 (TTSSSSLSHSSSSSSSSTS) are compositionally biased toward low complexity. A DNA-binding region (AP2/ERF) is located at residues 42 to 99 (KYKGVRMRSWGSWVTEIRAPNQKTRIWLGSYSTAEAAARAYDAALLCLKGPKANLNFP). The disordered stretch occupies residues 123-178 (QKVAAQAANSSSDHFTPPSDENDHDHDDGLDHHPSASSSAASSPPDDDHHNDDDGD). The segment covering 143–156 (ENDHDHDDGLDHHP) has biased composition (basic and acidic residues). Residues 157–166 (SASSSAASSP) are compositionally biased toward low complexity.

The protein belongs to the AP2/ERF transcription factor family. ERF subfamily.

The protein localises to the nucleus. Functionally, probably acts as a transcriptional activator. Binds to the GCC-box pathogenesis-related promoter element. May be involved in the regulation of gene expression by stress factors and by components of stress signal transduction pathways. This is Ethylene-responsive transcription factor ERF013 (ERF013) from Arabidopsis thaliana (Mouse-ear cress).